The chain runs to 1264 residues: uncharacterized protein (1264 aa).

The signal sequence occupies residues 1-18; sequence MMRKYLILLILLPALAVG. Residues 1215–1235 form a helical membrane-spanning segment; it reads SYTVLGVVVITILTMSIILCL.

Its subcellular location is the host membrane. This is an uncharacterized protein from Ostreid herpesvirus 1 (isolate France) (OsHV-1).